Here is a 56-residue protein sequence, read N- to C-terminus: Photosystem II reaction center protein K (56 aa).

Positions 1–19 (MLNFLLQNTFVLWSNFILC) are excised as a propeptide. The helical transmembrane segment at 35–55 (MPVIPVFFFLLAFVWQAAVSF) threads the bilayer.

This sequence belongs to the PsbK family. In terms of assembly, PSII is composed of 1 copy each of membrane proteins PsbA, PsbB, PsbC, PsbD, PsbE, PsbF, PsbH, PsbI, PsbJ, PsbK, PsbL, PsbM, PsbT, PsbX, PsbY, PsbZ, Psb30/Ycf12, at least 3 peripheral proteins of the oxygen-evolving complex and a large number of cofactors. It forms dimeric complexes.

The protein resides in the plastid. It localises to the chloroplast thylakoid membrane. One of the components of the core complex of photosystem II (PSII). PSII is a light-driven water:plastoquinone oxidoreductase that uses light energy to abstract electrons from H(2)O, generating O(2) and a proton gradient subsequently used for ATP formation. It consists of a core antenna complex that captures photons, and an electron transfer chain that converts photonic excitation into a charge separation. This is Photosystem II reaction center protein K from Welwitschia mirabilis (Tree tumbo).